Here is a 391-residue protein sequence, read N- to C-terminus: Na(+)/H(+) antiporter NhaA (391 aa).

11 consecutive transmembrane segments (helical) span residues 14-34, 47-67, 87-107, 117-137, 146-166, 171-191, 205-225, 252-272, 280-300, 318-338, and 356-376; these read AGGILLVIAAAIAMTIANSPL, FGMSVSHWINDGLMAVFFLLI, IFPAIAAVGGMLAPALIYVAF, GWAIPAATDIAFALGIMALLG, VFLLALAIIDDLGVVVIIALF, LSTMALLVGFAMTGVLFMLNA, AILWFAVLKSGVHATLAGVVI, VAFGILPLFAFANAGISLEGV, MLPLGIALGLLVGKPLGIFTF, FIHIFAVSVLCGIGFTMSIFI, and LGILMGSTTAAIIGYVLLHFS.

The protein belongs to the NhaA Na(+)/H(+) (TC 2.A.33) antiporter family.

The protein resides in the cell inner membrane. The catalysed reaction is Na(+)(in) + 2 H(+)(out) = Na(+)(out) + 2 H(+)(in). Na(+)/H(+) antiporter that extrudes sodium in exchange for external protons. This is Na(+)/H(+) antiporter NhaA from Vibrio campbellii (strain ATCC BAA-1116).